Here is a 943-residue protein sequence, read N- to C-terminus: Coiled-coil and C2 domain-containing protein 1A (943 aa).

Thr-91 carries the phosphothreonine modification. 2 disordered regions span residues 186-250 (NEAD…CSPL) and 300-337 (DLSR…VPQP). 2 stretches are compositionally biased toward low complexity: residues 195-206 (ASGKGAAAGHSH) and 229-238 (APSTTTPTSA). Ser-248 bears the Phosphoserine mark. Over residues 304 to 319 (LPPPPDQLSPEPPLPA) the composition is skewed to pro residues. A coiled-coil region spans residues 339 to 385 (RNLLEALEQRMERYHVAAAQAKAKGDQRKARMHERIVKQYQDAIRAH). The tract at residues 430–483 (NHDEGSDDEEEETPKKQNTPAASTTQLKSSPSKAPPSGPAPAGKAAPKGTSNRA) is disordered. Ser-435 carries the phosphoserine modification. Positions 445-456 (KQNTPAASTTQL) are enriched in polar residues. The segment covering 469–478 (APAGKAAPKG) has biased composition (low complexity). Residues 477 to 510 (KGTSNRAQQQLAFLEGRKKQLLQAALRAKQKNDV) are a coiled coil. In terms of domain architecture, C2 spans 630–764 (RFEQRTFSVI…ETACEVHEIL (135 aa)).

Belongs to the CC2D1 family. As to expression, highly expressed in brain, expression is enriched in the gray matter and strongest in the olfactory bulb.

It is found in the cytoplasm. It localises to the nucleus. The protein localises to the cytoskeleton. Its subcellular location is the microtubule organizing center. The protein resides in the centrosome. Functionally, transcription factor that binds specifically to the DRE (dual repressor element) and represses HTR1A gene transcription in neuronal cells. The combination of calcium and ATP specifically inactivates the binding with FRE. May play a role in the altered regulation of HTR1A associated with anxiety and major depression. Mediates HDAC-independent repression of HTR1A promoter in neuronal cell. Performs essential function in controlling functional maturation of synapses. This is Coiled-coil and C2 domain-containing protein 1A (Cc2d1a) from Mus musculus (Mouse).